The sequence spans 120 residues: UPF0231 protein Ent638_0667 (120 aa).

The protein belongs to the UPF0231 family.

The chain is UPF0231 protein Ent638_0667 from Enterobacter sp. (strain 638).